The chain runs to 229 residues: N-(5'-phosphoribosyl)anthranilate isomerase (229 aa).

This sequence belongs to the TrpF family.

It catalyses the reaction N-(5-phospho-beta-D-ribosyl)anthranilate = 1-(2-carboxyphenylamino)-1-deoxy-D-ribulose 5-phosphate. It participates in amino-acid biosynthesis; L-tryptophan biosynthesis; L-tryptophan from chorismate: step 3/5. The sequence is that of N-(5'-phosphoribosyl)anthranilate isomerase from Clostridium beijerinckii (strain ATCC 51743 / NCIMB 8052) (Clostridium acetobutylicum).